Here is a 428-residue protein sequence, read N- to C-terminus: Adenylosuccinate synthetase (428 aa).

Residues 12-18 (GDEGKGK) and 40-42 (GHT) contribute to the GTP site. Asp-13 acts as the Proton acceptor in catalysis. Asp-13 and Gly-40 together coordinate Mg(2+). Residues 13–16 (DEGK), 38–41 (NAGH), Thr-128, Arg-142, Gln-223, Thr-238, and Arg-302 each bind IMP. The active-site Proton donor is His-41. 298 to 304 (VTTGRPR) serves as a coordination point for substrate. GTP contacts are provided by residues Arg-304, 330–332 (KLD), and 412–414 (GTG).

Belongs to the adenylosuccinate synthetase family. As to quaternary structure, homodimer. Requires Mg(2+) as cofactor.

It is found in the cytoplasm. It carries out the reaction IMP + L-aspartate + GTP = N(6)-(1,2-dicarboxyethyl)-AMP + GDP + phosphate + 2 H(+). Its pathway is purine metabolism; AMP biosynthesis via de novo pathway; AMP from IMP: step 1/2. In terms of biological role, plays an important role in the de novo pathway of purine nucleotide biosynthesis. Catalyzes the first committed step in the biosynthesis of AMP from IMP. The chain is Adenylosuccinate synthetase from Bifidobacterium animalis subsp. lactis (strain AD011).